A 248-amino-acid chain; its full sequence is tRNA (guanine-N(1)-)-methyltransferase (248 aa).

S-adenosyl-L-methionine is bound by residues glycine 113 and 133-138 (IGDYVL).

The protein belongs to the RNA methyltransferase TrmD family. As to quaternary structure, homodimer.

The protein localises to the cytoplasm. The enzyme catalyses guanosine(37) in tRNA + S-adenosyl-L-methionine = N(1)-methylguanosine(37) in tRNA + S-adenosyl-L-homocysteine + H(+). In terms of biological role, specifically methylates guanosine-37 in various tRNAs. The chain is tRNA (guanine-N(1)-)-methyltransferase from Shewanella baltica (strain OS223).